Here is a 123-residue protein sequence, read N- to C-terminus: Small ribosomal subunit protein uS12 (123 aa).

3-methylthioaspartic acid is present on D89.

This sequence belongs to the universal ribosomal protein uS12 family. As to quaternary structure, part of the 30S ribosomal subunit. Contacts proteins S8 and S17. May interact with IF1 in the 30S initiation complex.

Functionally, with S4 and S5 plays an important role in translational accuracy. Interacts with and stabilizes bases of the 16S rRNA that are involved in tRNA selection in the A site and with the mRNA backbone. Located at the interface of the 30S and 50S subunits, it traverses the body of the 30S subunit contacting proteins on the other side and probably holding the rRNA structure together. The combined cluster of proteins S8, S12 and S17 appears to hold together the shoulder and platform of the 30S subunit. This Pelagibacter ubique (strain HTCC1062) protein is Small ribosomal subunit protein uS12.